Here is a 399-residue protein sequence, read N- to C-terminus: S-adenosylmethionine synthase (399 aa).

His-17 is a binding site for ATP. Position 19 (Asp-19) interacts with Mg(2+). Residue Glu-52 coordinates K(+). Glu-65 and Gln-109 together coordinate L-methionine. Residues 109-119 form a flexible loop region; sequence QSADIAQGVDA. Residues 177–179, 243–244, Asp-252, 258–259, Ala-275, and Lys-279 each bind ATP; these read DSK, KF, and RK. Asp-252 provides a ligand contact to L-methionine. Lys-283 provides a ligand contact to L-methionine.

This sequence belongs to the AdoMet synthase family. In terms of assembly, homotetramer; dimer of dimers. It depends on Mg(2+) as a cofactor. Requires K(+) as cofactor.

The protein localises to the cytoplasm. It carries out the reaction L-methionine + ATP + H2O = S-adenosyl-L-methionine + phosphate + diphosphate. It functions in the pathway amino-acid biosynthesis; S-adenosyl-L-methionine biosynthesis; S-adenosyl-L-methionine from L-methionine: step 1/1. Its function is as follows. Catalyzes the formation of S-adenosylmethionine (AdoMet) from methionine and ATP. The overall synthetic reaction is composed of two sequential steps, AdoMet formation and the subsequent tripolyphosphate hydrolysis which occurs prior to release of AdoMet from the enzyme. The polypeptide is S-adenosylmethionine synthase (Bradyrhizobium sp. (strain BTAi1 / ATCC BAA-1182)).